The chain runs to 258 residues: MLFWNADPILIQLGPIAVHWYGALFATGFLLGYQLMQRIYRQEGRPTEQLDKLLTYIFIGTVVGARLAHTLIYEPEYYLAHPIDILKIWEGGLASHGGGIGVLLAIWLFVRQHPENKFLWLADRLAIPTALTGCFIRLGNFMNSEIIGNSTDGSWGVVFERIDTLPRHPVQLYEAASYFAIFVLLLMLFRTTKSKQTGFLFGLFLTLVFAARFIIEYFKTPQAAYEAGNLISVGQWLSVPFVLAGIVLMLLSAKEKAR.

Helical transmembrane passes span 9–29 (ILIQ…ATGF), 53–73 (LLTY…TLIY), 90–110 (EGGL…WLFV), 117–139 (KFLW…IRLG), 169–189 (PVQL…LMLF), 198–218 (GFLF…IEYF), and 230–250 (LISV…VLML). Arg-137 contributes to the a 1,2-diacyl-sn-glycero-3-phospho-(1'-sn-glycerol) binding site.

This sequence belongs to the Lgt family.

The protein localises to the cell inner membrane. The catalysed reaction is L-cysteinyl-[prolipoprotein] + a 1,2-diacyl-sn-glycero-3-phospho-(1'-sn-glycerol) = an S-1,2-diacyl-sn-glyceryl-L-cysteinyl-[prolipoprotein] + sn-glycerol 1-phosphate + H(+). The protein operates within protein modification; lipoprotein biosynthesis (diacylglyceryl transfer). Functionally, catalyzes the transfer of the diacylglyceryl group from phosphatidylglycerol to the sulfhydryl group of the N-terminal cysteine of a prolipoprotein, the first step in the formation of mature lipoproteins. This chain is Phosphatidylglycerol--prolipoprotein diacylglyceryl transferase, found in Tolumonas auensis (strain DSM 9187 / NBRC 110442 / TA 4).